The chain runs to 336 residues: Calcium uniporter protein 3, mitochondrial (336 aa).

Residues 1-69 (MAMRKLLSKK…RFMHNSAMIR (69 aa)) constitute a mitochondrion transit peptide. A run of 2 helical transmembrane segments spans residues 231-251 (LWAGLGYLILQTAGFMRLTFW) and 257-277 (VMEPICFYVTSVYFMAGYAFF). The Selectivity filter motif lies at 255 to 263 (WDVMEPICF). Glu259 contributes to the Ca(2+) binding site.

This sequence belongs to the MCU (TC 1.A.77) family.

It localises to the mitochondrion inner membrane. It catalyses the reaction Ca(2+)(in) = Ca(2+)(out). Its function is as follows. Mitochondrial inner membrane calcium uniporter that mediates calcium uptake into mitochondria. Constitutes a pore-forming and calcium-conducting subunit. Mitochondrial calcium homeostasis plays key roles in cellular physiology and regulates cell bioenergetics, cytoplasmic calcium signals and activation of cell death pathways. This chain is Calcium uniporter protein 3, mitochondrial, found in Arabidopsis thaliana (Mouse-ear cress).